A 339-amino-acid chain; its full sequence is Dicamba O-demethylase, oxygenase component (339 aa).

The Rieske domain maps to 8–110; that stretch reads WYVAALPEEL…VVERDALIWI (103 aa). Positions 48, 50, 67, and 70 each coordinate [2Fe-2S] cluster. Fe cation is bound by residues His-159 and His-164. 3,6-dichloro-2-methoxybenzoate-binding residues include Asn-229, His-250, and Trp-284. Asp-293 serves as a coordination point for Fe cation.

Homotrimer. The dicamba O-demethylase multicomponent enzyme system is composed of an oxygenase component (DdmC) and an electron transfer component formed by a ferredoxin reductase (DdmA) and a ferredoxin (DdmB). In vitro, dicamba O-demethylase assays in which DdmA2 is substituted for DdmA1 demonstrate that the two enzymes possess nearly identical activities. The cofactor is [2Fe-2S] cluster.

The catalysed reaction is 3,6-dichloro-2-methoxybenzoate + 2 reduced [2Fe-2S]-[ferredoxin] + O2 + 2 H(+) = 3,6-dichlorosalicylate + formaldehyde + 2 oxidized [2Fe-2S]-[ferredoxin] + H2O. Activity enhanced by Fe(2+) and Mg(2+) ions. In terms of biological role, component of the dicamba O-demethylase multicomponent enzyme system involved in the degradation of the herbicide dicamba. In vitro, catalyzes the O-demethylation of 2-methoxy-3,6-dichlorobenzoic acid (dicamba) to yield 3,6-dichlorosalicylic acid (DCSA) via an exocyclic monooxygenation. This is Dicamba O-demethylase, oxygenase component from Stenotrophomonas maltophilia (Pseudomonas maltophilia).